A 381-amino-acid polypeptide reads, in one-letter code: Acetyl-CoA:oxalate CoA-transferase (381 aa).

Histidine 233 is an active-site residue.

The protein belongs to the CoA-transferase III family. Homodimer.

The enzyme catalyses oxalate + acetyl-CoA = oxalyl-CoA + acetate. In terms of biological role, involved in the catabolism of oxalate and in the adapatation to low pH. ACOCT serves to prime the oxalate-induced acid tolerance response (ATR) cycle by producing substrate for oxalyl-CoA decarboxylase (OXC) and formyl-coenzyme A transferase (FCOCT). Catalyzes the reversible conversion of acetyl-CoA and oxalate to oxalyl-CoA and acetate. It can also use formyl-CoA and oxalate to produce oxalyl-CoA and formate with significantly reduced specific activity. This Escherichia coli (strain K12) protein is Acetyl-CoA:oxalate CoA-transferase (yfdE).